The following is an 836-amino-acid chain: Enhancer of polycomb homolog 1 (836 aa).

Residue lysine 319 forms a Glycyl lysine isopeptide (Lys-Gly) (interchain with G-Cter in SUMO2) linkage. Disordered stretches follow at residues 335 to 360 (KRKYEKKPKVLPSSAAATPQQTSPAA) and 372 to 401 (YDFPSSDEEPLSQVLSGSSEAEEDNDPDGP). A compositionally biased stretch (low complexity) spans 346-360 (PSSAAATPQQTSPAA). Residue serine 539 is modified to Phosphoserine. Lysine 673 participates in a covalent cross-link: Glycyl lysine isopeptide (Lys-Gly) (interchain with G-Cter in SUMO2). A disordered region spans residues 802–829 (VPSSSSVDSVPRENHESEKPALNNIADN). Positions 811-820 (VPRENHESEK) are enriched in basic and acidic residues.

The protein belongs to the enhancer of polycomb family. As to quaternary structure, component of the NuA4 histone acetyltransferase complex which contains the catalytic subunit KAT5/TIP60 and the subunits EP400, TRRAP/PAF400, BRD8/SMAP, EPC1, DMAP1/DNMAP1, RUVBL1/TIP49, RUVBL2, ING3, actin, ACTL6A/BAF53A, MORF4L1/MRG15, MORF4L2/MRGX, MRGBP, YEATS4/GAS41, VPS72/YL1 and MEAF6. KAT5/TIP60, EPC1, and ING3 together constitute a minimal HAT complex termed Piccolo NuA4. Component of a NuA4-related complex which contains EP400, TRRAP/PAF400, SRCAP, BRD8/SMAP, EPC1, DMAP1/DNMAP1, RUVBL1/TIP49, RUVBL2, actin, ACTL6A/BAF53A, VPS72 and YEATS4/GAS41. Interacts with TRIM27. Interacts with MBTD1; interaction is direct and promotes recruitment of MBTD1 into the NuA4 histone acetyltransferase complex.

The protein localises to the nucleus. It localises to the cytoplasm. Component of the NuA4 histone acetyltransferase (HAT) complex, a multiprotein complex involved in transcriptional activation of select genes principally by acetylation of nucleosomal histones H4 and H2A. The NuA4 complex plays a direct role in repair of DNA double-strand breaks (DSBs) by promoting homologous recombination (HR). The NuA4 complex is also required for spermatid development by promoting acetylation of histones: histone acetylation is required for histone replacement during the transition from round to elongating spermatids. In the NuA4 complex, EPC1 is required to recruit MBTD1 into the complex. The chain is Enhancer of polycomb homolog 1 from Homo sapiens (Human).